We begin with the raw amino-acid sequence, 225 residues long: pH-response regulator palI/RIM9 homolog 2 (225 aa).

Residues 1–4 (MLVK) lie on the Cytoplasmic side of the membrane. The helical transmembrane segment at 5-25 (IVLVVLLTLALVFECFSTISV) threads the bilayer. At 26–87 (PITIGLYISE…PNHAKYALSN (62 aa)) the chain is on the extracellular side. The helical transmembrane segment at 88–108 (LLLVHVLAFVCVTILWVFGML) threads the bilayer. Topologically, residues 109 to 120 (TCFRCIKTSRRM) are cytoplasmic. A helical transmembrane segment spans residues 121-141 (LIIAVLWSMLTFMVTLLGFLI). The Extracellular segment spans residues 142–153 (DILIFSSHVTWC). Residues 154-174 (TWLTLASAFFTVLSGTVLCVM) traverse the membrane as a helical segment. Topologically, residues 175–225 (RRNLTYDKFLESKPEKHGVYVPLCRLNDVEELEIPWCNTMNHQALTAPTPM) are cytoplasmic.

Belongs to the palI/RIM9 family.

It is found in the cell membrane. Its function is as follows. Required for the proteolytic cleavage of the transcription factor RIM101 in response to alkaline ambient pH. This is pH-response regulator palI/RIM9 homolog 2 from Kluyveromyces lactis (strain ATCC 8585 / CBS 2359 / DSM 70799 / NBRC 1267 / NRRL Y-1140 / WM37) (Yeast).